A 341-amino-acid polypeptide reads, in one-letter code: Small ribosomal subunit biogenesis GTPase RsgA (341 aa).

The region spanning 112-268 (RQQLIAANLD…LIDTPGMREL (157 aa)) is the CP-type G domain. Residues 157 to 160 (TKVD) and 210 to 218 (GSSGAGKST) contribute to the GTP site. The Zn(2+) site is built by Cys-290, Cys-295, His-297, and Cys-303.

The protein belongs to the TRAFAC class YlqF/YawG GTPase family. RsgA subfamily. In terms of assembly, monomer. Associates with 30S ribosomal subunit, binds 16S rRNA. Requires Zn(2+) as cofactor.

The protein resides in the cytoplasm. In terms of biological role, one of several proteins that assist in the late maturation steps of the functional core of the 30S ribosomal subunit. Helps release RbfA from mature subunits. May play a role in the assembly of ribosomal proteins into the subunit. Circularly permuted GTPase that catalyzes slow GTP hydrolysis, GTPase activity is stimulated by the 30S ribosomal subunit. This is Small ribosomal subunit biogenesis GTPase RsgA from Xylella fastidiosa (strain Temecula1 / ATCC 700964).